The primary structure comprises 371 residues: N-acetyldiaminopimelate deacetylase (371 aa).

The active site involves D68. E127 acts as the Proton acceptor in catalysis.

This sequence belongs to the peptidase M20A family. N-acetyldiaminopimelate deacetylase subfamily.

It carries out the reaction N-acetyl-(2S,6S)-2,6-diaminopimelate + H2O = (2S,6S)-2,6-diaminopimelate + acetate. Its pathway is amino-acid biosynthesis; L-lysine biosynthesis via DAP pathway; LL-2,6-diaminopimelate from (S)-tetrahydrodipicolinate (acetylase route): step 3/3. Catalyzes the conversion of N-acetyl-diaminopimelate to diaminopimelate and acetate. The sequence is that of N-acetyldiaminopimelate deacetylase from Listeria monocytogenes serovar 1/2a (strain ATCC BAA-679 / EGD-e).